Here is a 395-residue protein sequence, read N- to C-terminus: Dual specificity protein phosphatase 4 (395 aa).

Val2 carries the post-translational modification N-acetylvaline. The region spanning 42-160 (SGGKCLLLDC…FSSEYPEFCS (119 aa)) is the Rhodanese domain. A Tyrosine-protein phosphatase domain is found at 196-337 (GPVEILPFLY…LLQFESQVLT (142 aa)). Residue Cys281 is the Phosphocysteine intermediate of the active site. Ser387 and Ser392 each carry phosphoserine; by MAPK.

This sequence belongs to the protein-tyrosine phosphatase family. Non-receptor class dual specificity subfamily. In terms of assembly, hollow spherical complex composed of 24 subunits with pseudooctahedral symmetry, has a tetramer as the basic unit. Phosphorylation in the C-terminus by ERK1/2 inhibits proteasomal degradation and stabilizes the protein. As to expression, expressed at moderate levels in nearly all tissues and cells including brain, spleen, and testes with the higher expression in the heart and lung and lower expression in skeletal muscle and kidney. Undetectable in liver. Expressed in many areas of the brain with very strong expression in the hippocampus, piriform cortex, and the suprachiasmatic nucleus.

The protein localises to the nucleus. It carries out the reaction O-phospho-L-tyrosyl-[protein] + H2O = L-tyrosyl-[protein] + phosphate. It catalyses the reaction O-phospho-L-seryl-[protein] + H2O = L-seryl-[protein] + phosphate. The catalysed reaction is O-phospho-L-threonyl-[protein] + H2O = L-threonyl-[protein] + phosphate. Functionally, regulates mitogenic signal transduction by dephosphorylating both Thr and Tyr residues on MAP kinases ERK1 and ERK2. This Rattus norvegicus (Rat) protein is Dual specificity protein phosphatase 4 (Dusp4).